Consider the following 176-residue polypeptide: Woronin body major protein (176 aa).

A propeptide spanning residues 1-16 (MGYYDDDAHGHVEADA) is cleaved from the precursor. Positions 1-16 (MGYYDDDAHGHVEADA) are enriched in basic and acidic residues. The tract at residues 1-31 (MGYYDDDAHGHVEADAAPRATTGTGTGSASQ) is disordered. The Microbody targeting signal signature appears at 174-176 (SRL).

This sequence belongs to the eIF-5A family. Hex1 subfamily. Forms oligomers. Self-assembles into hexagonal rods.

The protein resides in the cell septum. Major component of Woronin bodies, fungal-specific organelles that occlude septal pores in order to separate intact from damaged compartments. Hex-1 binds directly or indirectly to the Woronin body tether that in turn is anchored at the rim of the septal pore. The protein is Woronin body major protein of Neurospora crassa (strain ATCC 24698 / 74-OR23-1A / CBS 708.71 / DSM 1257 / FGSC 987).